The following is a 206-amino-acid chain: Inosine triphosphate pyrophosphatase (206 aa).

Threonine 21–lysine 26 is a binding site for ITP. Mg(2+) is bound at residue glutamate 49. ITP contacts are provided by residues lysine 61, aspartate 77–threonine 78, lysine 94, phenylalanine 153–aspartate 156, lysine 176, and histidine 181–arginine 182.

The protein belongs to the HAM1 NTPase family. As to quaternary structure, homodimer. The cofactor is Mg(2+). Mn(2+) serves as cofactor.

It is found in the cytoplasm. The enzyme catalyses ITP + H2O = IMP + diphosphate + H(+). It catalyses the reaction dITP + H2O = dIMP + diphosphate + H(+). The catalysed reaction is XTP + H2O = XMP + diphosphate + H(+). Its function is as follows. Pyrophosphatase that hydrolyzes non-canonical purine nucleotides such as inosine triphosphate (ITP), deoxyinosine triphosphate (dITP) or xanthosine 5'-triphosphate (XTP) to their respective monophosphate derivatives. The enzyme does not distinguish between the deoxy- and ribose forms. Probably excludes non-canonical purines from RNA and DNA precursor pools, thus preventing their incorporation into RNA and DNA and avoiding chromosomal lesions. This is Inosine triphosphate pyrophosphatase from Vitis vinifera (Grape).